Consider the following 137-residue polypeptide: Large ribosomal subunit protein uL11 (137 aa).

The protein belongs to the universal ribosomal protein uL11 family. Part of the ribosomal stalk of the 50S ribosomal subunit. Interacts with L10 and the large rRNA to form the base of the stalk. L10 forms an elongated spine to which L12 dimers bind in a sequential fashion forming a multimeric L10(L12)X complex. Post-translationally, one or more lysine residues are methylated.

Forms part of the ribosomal stalk which helps the ribosome interact with GTP-bound translation factors. The sequence is that of Large ribosomal subunit protein uL11 from Mycoplasma pneumoniae (strain ATCC 29342 / M129 / Subtype 1) (Mycoplasmoides pneumoniae).